The sequence spans 211 residues: Uracil phosphoribosyltransferase (211 aa).

5-phospho-alpha-D-ribose 1-diphosphate contacts are provided by residues R78, R103, and 130-138; that span reads DPMLATGGT. Uracil-binding positions include I195 and 200–202; that span reads GDA. D201 lines the 5-phospho-alpha-D-ribose 1-diphosphate pocket.

Belongs to the UPRTase family. Mg(2+) is required as a cofactor.

It catalyses the reaction UMP + diphosphate = 5-phospho-alpha-D-ribose 1-diphosphate + uracil. Its pathway is pyrimidine metabolism; UMP biosynthesis via salvage pathway; UMP from uracil: step 1/1. With respect to regulation, allosterically activated by GTP. Its function is as follows. Catalyzes the conversion of uracil and 5-phospho-alpha-D-ribose 1-diphosphate (PRPP) to UMP and diphosphate. This is Uracil phosphoribosyltransferase from Kocuria rhizophila (strain ATCC 9341 / DSM 348 / NBRC 103217 / DC2201).